Consider the following 490-residue polypeptide: Transcription factor lin-26 (490 aa).

Disordered stretches follow at residues 96–176, 236–262, and 302–326; these read KYKD…PLHQ, TPEY…EPDS, and ASKP…KKHR. Positions 101 to 110 are PEST; it reads SSSPESPSTT. Over residues 101-120 the composition is skewed to low complexity; the sequence is SSSPESPSTTASTAAQHTPP. Composition is skewed to polar residues over residues 123 to 132 and 151 to 176; these read AVSTPTSINT and NLST…PLHQ. Basic and acidic residues predominate over residues 236–260; the sequence is TPEYDDNHHSETISKASSEDLKTEP. A C2H2-type; degenerate zinc finger spans residues 353-381; sequence YKCALCGKPTTLNSTGSRWNLLRHVIMIH.

In terms of tissue distribution, expressed in somatic gonads and germline precursors until the 50-cell stage. After the 100-cell stage, expression is seen in differentiating hypodermal and support cells (at protein level).

Its subcellular location is the nucleus. Probable transcription factor. Required to specify the fates of hypodermal and neuron-associated support cells. Functions during vulval development, playing a role in vulval precursor cell fate specification. Positively modulates expression of homeobox protein lin-39, perhaps by binding to regulatory regions of the lin-39 gene, acting in the vulval lineage. This chain is Transcription factor lin-26, found in Caenorhabditis elegans.